The primary structure comprises 227 residues: Uracil phosphoribosyltransferase (227 aa).

Residue 36-40 (KGLVK) participates in GTP binding. Residues arginine 86, arginine 111, and 145 to 153 (DPMLATGST) each bind 5-phospho-alpha-D-ribose 1-diphosphate. Residues isoleucine 212 and 217–219 (GDA) each bind uracil. Aspartate 218 provides a ligand contact to 5-phospho-alpha-D-ribose 1-diphosphate.

It belongs to the UPRTase family. Mg(2+) is required as a cofactor.

The catalysed reaction is UMP + diphosphate = 5-phospho-alpha-D-ribose 1-diphosphate + uracil. The protein operates within pyrimidine metabolism; UMP biosynthesis via salvage pathway; UMP from uracil: step 1/1. Allosterically activated by GTP. Its function is as follows. Catalyzes the conversion of uracil and 5-phospho-alpha-D-ribose 1-diphosphate (PRPP) to UMP and diphosphate. The sequence is that of Uracil phosphoribosyltransferase from Halobacterium salinarum (strain ATCC 700922 / JCM 11081 / NRC-1) (Halobacterium halobium).